Here is a 749-residue protein sequence, read N- to C-terminus: Protein lin-54 homolog (749 aa).

A Glycyl lysine isopeptide (Lys-Gly) (interchain with G-Cter in SUMO2) cross-link involves residue Lys139. An N6-acetyllysine mark is found at Lys244 and Lys249. Residues Ser264, Ser282, Ser310, and Ser314 each carry the phosphoserine modification. A Glycyl lysine isopeptide (Lys-Gly) (interchain with G-Cter in SUMO2) cross-link involves residue Lys357. The CRC domain occupies 521-634; the sequence is PRKPCNCTKS…KCIGCKNFEE (114 aa). The DNA-binding stretch occupies residues 523 to 536; the sequence is KPCNCTKSLCLKLY. Cys525, Cys527, Cys532, Cys537, Cys539, Cys546, Cys549, Cys551, and Cys554 together coordinate Zn(2+). A linker region spans residues 583–596; the sequence is IGKGKEGESDRRHS. Cys599, Cys601, Cys606, Cys611, Cys613, Cys620, Cys624, Cys626, and Cys629 together coordinate Zn(2+). The DNA-binding stretch occupies residues 599–612; that stretch reads CNCKRSGCLKNYCE. Position 635 is a phosphoserine (Ser635). Residues Lys639, Lys659, and Lys661 each participate in a glycyl lysine isopeptide (Lys-Gly) (interchain with G-Cter in SUMO2) cross-link.

Belongs to the lin-54 family. Component of the DREAM complex (also named LINC complex) at least composed of E2F4, E2F5, LIN9, LIN37, LIN52, LIN54, MYBL1, MYBL2, RBL1, RBL2, RBBP4, RBL2, TFDP1 and TFDP2. The complex exists in quiescent cells where it represses cell cycle-dependent genes. It dissociates in S phase when LIN9, LIN37, LIN52 and LIN54 form a subcomplex that binds to MYBL2.

Its subcellular location is the nucleus. Functionally, component of the DREAM complex, a multiprotein complex that can both act as a transcription activator or repressor depending on the context. In G0 phase, the complex binds to more than 800 promoters and is required for repression of E2F target genes. In S phase, the complex selectively binds to the promoters of G2/M genes whose products are required for mitosis and participates in their cell cycle dependent activation. In the complex, acts as a DNA-binding protein that binds the promoter of CDK1 in a sequence-specific manner. Specifically recognizes the consensus motif 5'-TTYRAA-3' in target DNA. The sequence is that of Protein lin-54 homolog (Lin54) from Mus musculus (Mouse).